Here is a 599-residue protein sequence, read N- to C-terminus: MSDLSHIRNFSIIAHIDHGKSTLADRFIQICGGLSEREMEAQVLDSMDLERERGITIKAHSVTLHYKAQDGKTYQLNFIDTPGHVDFTYEVSRSLAACEGALLVVDAGQGVEAQSVANCYTAIEQGLEVMPVLNKMDLPQAEPERVKDEIEHIIGIDAGDAVLCSAKSGMGVPDVLEHLVRVIPPPQGEIEAPLQALIIDSWFDNYLGVVSLVRVKHGRVKKGDKILVKSTGKVHQVDSVGVFTPKHTEMPDLKAGEVGFIIAGIKDIHGAPVGDTLTLSSTPNVDMLPGFQRIKPQVYAGLFPVSSDDFEDFREALQKLTLNDAALQYEPESSDALGFGFRIGFLGMLHMEIIQERLEREYDLDLITTAPTVVYEVLLKNGDTICVDNPSKLPDLASIAEMREPIVRANILVPQEHLGNVINLCIEKRGVQRDMQFLSSQVQISYDLPMNEVVLDFFDRLKSVSRGYASLDYSFDRFQVANLVKLDVLINGDKVDALALIVHRDKAHQKGRALTEKMKELIPRQMFDVAIQAAIGGQVVARTTVKALRKNVLAKCYGGDVTRKRKLLEKQKAGKKRMKQVGSVEIPQEAFLAVLKVDS.

Residues 5–187 (SHIRNFSIIA…HLVRVIPPPQ (183 aa)) enclose the tr-type G domain. GTP contacts are provided by residues 17 to 22 (DHGKST) and 134 to 137 (NKMD).

The protein belongs to the TRAFAC class translation factor GTPase superfamily. Classic translation factor GTPase family. LepA subfamily.

The protein localises to the cell inner membrane. The catalysed reaction is GTP + H2O = GDP + phosphate + H(+). Required for accurate and efficient protein synthesis under certain stress conditions. May act as a fidelity factor of the translation reaction, by catalyzing a one-codon backward translocation of tRNAs on improperly translocated ribosomes. Back-translocation proceeds from a post-translocation (POST) complex to a pre-translocation (PRE) complex, thus giving elongation factor G a second chance to translocate the tRNAs correctly. Binds to ribosomes in a GTP-dependent manner. This chain is Elongation factor 4, found in Azotobacter vinelandii (strain DJ / ATCC BAA-1303).